Reading from the N-terminus, the 144-residue chain is Large ribosomal subunit protein uL16 (144 aa).

This sequence belongs to the universal ribosomal protein uL16 family. Part of the 50S ribosomal subunit.

In terms of biological role, binds 23S rRNA and is also seen to make contacts with the A and possibly P site tRNAs. The chain is Large ribosomal subunit protein uL16 from Thermoanaerobacter pseudethanolicus (strain ATCC 33223 / 39E) (Clostridium thermohydrosulfuricum).